The following is a 214-amino-acid chain: MNLIQLKKWFTILTFVLTAFLVTRTAIAETSPYVLMQQAADKLFSDIQANQSKIKQDPNYLRTIVRNDLLPYVNLEYAGSKVLGSYYKSTSAEQREKFFKTFGELIEQKYAQALTNYSNQKIQIESEKELGDNNFINIRVNIIQANGVAPILLYFKWRKGNKSGEWKVYDMVGAGVSMLEDTIKNWVGILNKQGIDTLITKMQQSASQPIIFNQ.

The N-terminal stretch at 1–28 (MNLIQLKKWFTILTFVLTAFLVTRTAIA) is a signal peptide.

This sequence belongs to the MlaC/ttg2D family.

It localises to the periplasm. In terms of biological role, involved in a phospholipid transport pathway that maintains lipid asymmetry in the outer membrane by retrograde trafficking of phospholipids from the outer membrane to the inner membrane. May transfer phospholipid across the periplasmic space and deliver it to the MlaFEDB complex at the inner membrane. In Haemophilus influenzae (strain ATCC 51907 / DSM 11121 / KW20 / Rd), this protein is Intermembrane phospholipid transport system binding protein MlaC.